Here is a 340-residue protein sequence, read N- to C-terminus: Beta-ketoacyl-[acyl-carrier-protein] synthase III (340 aa).

Residues C119 and H260 contribute to the active site. Positions 261–265 are ACP-binding; sequence QANYR. N290 is an active-site residue.

Belongs to the thiolase-like superfamily. FabH family. Homodimer.

Its subcellular location is the cytoplasm. The enzyme catalyses malonyl-[ACP] + acetyl-CoA + H(+) = 3-oxobutanoyl-[ACP] + CO2 + CoA. It functions in the pathway lipid metabolism; fatty acid biosynthesis. In terms of biological role, catalyzes the condensation reaction of fatty acid synthesis by the addition to an acyl acceptor of two carbons from malonyl-ACP. Catalyzes the first condensation reaction which initiates fatty acid synthesis and may therefore play a role in governing the total rate of fatty acid production. Possesses both acetoacetyl-ACP synthase and acetyl transacylase activities. Its substrate specificity determines the biosynthesis of branched-chain and/or straight-chain of fatty acids. This is Beta-ketoacyl-[acyl-carrier-protein] synthase III from Sulfurovum sp. (strain NBC37-1).